The chain runs to 259 residues: MLSKRIIPCLDVRAGKTTKGIKFQNNVEIGDPVEMAKFYYEAGADELVFYDITASHEQRGIMIDVVKKVAETIFIPFSVGGGISTLEGMRAVLLAGAEKVSVNSAAVKNPDIIRQGSRAFGNQCVVLGMDVKHVGEKPGIASGYEIVINGGRSYTGMDAIAWALKAQDLGAGEICLNSIDADGTKDGYEINLTRLVSDAVDIPVIASGGAGTPAHLAHVLDQGRADAALIASMVHFGTYTVNQIKGYLHDHGVKVRKTW.

Catalysis depends on residues Asp-11 and Asp-130.

The protein belongs to the HisA/HisF family. As to quaternary structure, heterodimer of HisH and HisF.

The protein localises to the cytoplasm. It catalyses the reaction 5-[(5-phospho-1-deoxy-D-ribulos-1-ylimino)methylamino]-1-(5-phospho-beta-D-ribosyl)imidazole-4-carboxamide + L-glutamine = D-erythro-1-(imidazol-4-yl)glycerol 3-phosphate + 5-amino-1-(5-phospho-beta-D-ribosyl)imidazole-4-carboxamide + L-glutamate + H(+). Its pathway is amino-acid biosynthesis; L-histidine biosynthesis; L-histidine from 5-phospho-alpha-D-ribose 1-diphosphate: step 5/9. Its function is as follows. IGPS catalyzes the conversion of PRFAR and glutamine to IGP, AICAR and glutamate. The HisF subunit catalyzes the cyclization activity that produces IGP and AICAR from PRFAR using the ammonia provided by the HisH subunit. The sequence is that of Imidazole glycerol phosphate synthase subunit HisF from Desulforapulum autotrophicum (strain ATCC 43914 / DSM 3382 / VKM B-1955 / HRM2) (Desulfobacterium autotrophicum).